A 4250-amino-acid chain; its full sequence is Dynein axonemal heavy chain 1 (4250 aa).

The interval 1–73 (MEECNKEGPS…KSPLTGTDKK (73 aa)) is disordered. The tract at residues 1 to 1527 (MEECNKEGPS…YIRAVNAEFI (1527 aa)) is stem. Positions 24-42 (PESHDLEKILQESNYHPER) are enriched in basic and acidic residues. Pro residues predominate over residues 46 to 55 (NPDPKTPPLP). AAA stretches follow at residues 1528 to 1749 (YGYE…VISA), 1809 to 2042 (QAIR…NTVK), 2174 to 2434 (TMMP…VFQG), and 2532 to 2784 (DYNQ…LARH). A GPAGTGKT motif motif is present at residues 1566–1573 (GPAGTGKT). 1566-1573 (GPAGTGKT) contacts ATP. The CFDEFNR motif signature appears at 1616 to 1622 (CFDEFNR). ATP-binding positions include 1847-1854 (GPTGSGKS), 2212-2219 (GPTGTGKT), and 2571-2578 (GVGGSGRS). The tract at residues 2799-3097 (FSILIGQKKM…EELEMKCEQC (299 aa)) is stalk. The stretch at 3045–3128 (LREAQDDLEV…QETVENLENM (84 aa)) forms a coiled coil. AAA stretches follow at residues 3182-3412 (LGNP…EIQA) and 3625-3844 (MQDF…QLKM).

Belongs to the dynein heavy chain family. As to quaternary structure, consists of at least two heavy chains and a number of intermediate and light chains.

It is found in the cytoplasm. It localises to the cytoskeleton. The protein localises to the cilium axoneme. Its subcellular location is the cell projection. The protein resides in the cilium. It is found in the flagellum. Force generating protein of cilia required for sperm flagellum motility. Produces force towards the minus ends of microtubules. Dynein has ATPase activity; the force-producing power stroke is thought to occur on release of ADP. Required in spermatozoa for the formation of the inner dynein arms and biogenesis of the axoneme. The sequence is that of Dynein axonemal heavy chain 1 from Mus musculus (Mouse).